A 492-amino-acid polypeptide reads, in one-letter code: Katanin p60 ATPase-containing subunit A1 (492 aa).

Positions 80–186 (STPPKASQQE…ESEPKKFDST (107 aa)) are disordered. Positions 145–171 (PNDKGKAVRGREKKDQQNKGKEEKSKS) are enriched in basic and acidic residues. Residue 250–257 (GPPGTGKT) coordinates ATP.

The protein belongs to the AAA ATPase family. Katanin p60 subunit A1 subfamily. As to quaternary structure, can homooligomerize into hexameric rings, which may be promoted by interaction with microtubules. Interacts with KATNB1, which may serve as a targeting subunit.

It localises to the cytoplasm. It is found in the cytoskeleton. Its subcellular location is the microtubule organizing center. The protein resides in the centrosome. The protein localises to the spindle pole. It localises to the spindle. It catalyses the reaction n ATP + n H2O + a microtubule = n ADP + n phosphate + (n+1) alpha/beta tubulin heterodimers.. ATPase activity is stimulated by microtubules, which promote homooligomerization. ATP-dependent microtubule severing is stimulated by interaction with KATNB1. Functionally, catalytic subunit of a complex which severs microtubules in an ATP-dependent manner. Microtubule severing may promote rapid reorganization of cellular microtubule arrays and the release of microtubules from the centrosome following nucleation. This Gallus gallus (Chicken) protein is Katanin p60 ATPase-containing subunit A1.